The chain runs to 49 residues: Large ribosomal subunit protein bL33B (49 aa).

Belongs to the bacterial ribosomal protein bL33 family.

The polypeptide is Large ribosomal subunit protein bL33B (Lactobacillus delbrueckii subsp. bulgaricus (strain ATCC BAA-365 / Lb-18)).